Consider the following 214-residue polypeptide: CASP-like protein 0U1 (214 aa).

Over methionine 1–glycine 82 the chain is Cytoplasmic. Residues valine 83 to phenylalanine 103 traverse the membrane as a helical segment. The Extracellular segment spans residues serine 104–glutamate 112. The chain crosses the membrane as a helical span at residues phenylalanine 113–serine 133. At cysteine 134–lysine 153 the chain is on the cytoplasmic side. Residues alanine 154–phenylalanine 174 form a helical membrane-spanning segment. Topologically, residues lysine 175–proline 214 are extracellular. The disordered stretch occupies residues arginine 194–proline 214.

The protein belongs to the Casparian strip membrane proteins (CASP) family. Homodimer and heterodimers.

It localises to the cell membrane. This chain is CASP-like protein 0U1, found in Ostreococcus tauri.